An 86-amino-acid chain; its full sequence is Small ribosomal subunit protein eS27 (86 aa).

Residues 39–61 form a C4-type zinc finger; the sequence is CQGCFNITTVFSHSQTVVVCPGC.

It belongs to the eukaryotic ribosomal protein eS27 family. The cofactor is Zn(2+).

The protein is Small ribosomal subunit protein eS27 (RPS27) of Hordeum vulgare (Barley).